Here is a 1166-residue protein sequence, read N- to C-terminus: UDP-N-acetylglucosamine transferase subunit ALG13 (1166 aa).

Residues 1–125 (MKRAFVTVGT…LHKEGHLFYC (125 aa)) are glycosyltransferase activity. Positions 126–394 (TCRVLSCPAP…GSRRNKHHAL (269 aa)) are deubiquitinase activity. In terms of domain architecture, OTU spans 225–346 (LFRKVVAKDA…NGHYDSVYSK (122 aa)). The For deubiquitinase activity role is filled by D233. C236 functions as the Nucleophile; for deubiquitinase activity in the catalytic mechanism. The active-site For deubiquitinase activity is the H339. Positions 393-438 (ALTASVEGSSDQKSSTEDRTEEAAACSSAASTPEGNKQGTERQKVP) are disordered. The 61-residue stretch at 486–546 (YYFLGDKCQV…RPVNQVALLP (61 aa)) folds into the Tudor domain. 3 stretches are compositionally biased toward pro residues: residues 921-930 (PPPLPPPPPA), 941-957 (PLPP…PPYS), and 1004-1034 (QPQP…PPPQ). Disordered stretches follow at residues 921-966 (PPPL…SDLP) and 998-1056 (QQQL…EQPL).

This sequence belongs to the glycosyltransferase 28 family. As to quaternary structure, forms with ALG14 the active heterodimeric UDP-N-acetylglucosamine transferase complex. Not able to interact with ALG14 to form an active UDP-N-acetylglucosamine transferase complex.

Its subcellular location is the endoplasmic reticulum membrane. It carries out the reaction an N-acetyl-alpha-D-glucosaminyl-diphospho-di-trans,poly-cis-dolichol + UDP-N-acetyl-alpha-D-glucosamine = an N,N'-diacetylchitobiosyl-diphospho-di-trans,poly-cis-dolichol + UDP + H(+). Its pathway is protein modification; protein glycosylation. Catalytic subunit of the UDP-N-acetylglucosamine transferase complex that operates in the biosynthetic pathway of dolichol-linked oligosaccharides, the glycan precursors employed in protein asparagine (N)-glycosylation. The assembly of dolichol-linked oligosaccharides begins on the cytosolic side of the endoplasmic reticulum membrane and finishes in its lumen. The sequential addition of sugars to dolichol pyrophosphate produces dolichol-linked oligosaccharides containing fourteen sugars, including two GlcNAcs, nine mannoses and three glucoses. Once assembled, the oligosaccharide is transferred from the lipid to nascent proteins by oligosaccharyltransferases. On the cytoplasmic face of the endoplasmic reticulum, the dimeric ALG13/ALG14 complex catalyzes the second step of dolichol pyrophosphate biosynthesis, transferring a beta1,4-linked N-acetylglucosamine (GlcNAc) from UDP-GlcNAc to GlcNAc-pyrophosphatedolichol (Gn-PDol) to produce N,N'-diacetylchitobiosyl diphosphodolichol. N,N'-diacetylchitobiosyl diphosphodolichol is a substrate for ALG1, the following enzyme in the biosynthetic pathway. Functionally, no glycosyltransferase or deubiquitinase activity is detected for this potential multifunctional enzyme. This chain is UDP-N-acetylglucosamine transferase subunit ALG13, found in Mus musculus (Mouse).